Reading from the N-terminus, the 175-residue chain is MPSKNSINRPKLTSNLHHKVHSLNKKRAQRERAGLLKPARSSVNSKSGEIKSVALDLYFQNKKNESQNSTAVTLQNASSSPASITTRTLSKKRAKKIERNLKYATQRKLLVDASAKLEDEMDIDLDGGKKVKENEKKSSLTLVKEALWSVIDDTASQGLIIENGQGTTLGGPFFP.

The span at 1–15 (MPSKNSINRPKLTSN) shows a compositional bias: polar residues. Disordered regions lie at residues 1–43 (MPSK…RSSV) and 72–91 (VTLQ…TLSK). Residues 16-29 (LHHKVHSLNKKRAQ) are compositionally biased toward basic residues. Residues 72–88 (VTLQNASSSPASITTRT) show a composition bias toward polar residues.

The protein belongs to the ALB1 family. As to quaternary structure, component of the nucleoplasmic and cytoplasmic pre-60S ribosomal particles.

The protein resides in the cytoplasm. Its subcellular location is the nucleus. Involved in proper assembly of pre-ribosomal particles during the biogenesis of the 60S ribosomal subunit. Accompanies the pre-60S particles to the cytoplasm. The chain is Ribosome biogenesis protein ALB1 (ALB1) from Saccharomyces cerevisiae (strain YJM789) (Baker's yeast).